Consider the following 1296-residue polypeptide: MLILRGAPALSEFRVNKILARCQQSQLPVTNVYAEYAHFADLTSPLSSAEQTKLEKLLTYGPTIAEHTPAGKLVLVTPRPGTISPWASKATDIAHNCGLKQVHRVERGIAYYVEGELNAEQLLQVTALLHDRMTEATHSQFEDAAQLFRSDAPRQMSSVDILSGGREALAIANVEQGFALADDEIDYLVENFIKLGRNPNDIELFMFAQANSEHCRHKIFNADWTIDGEEQPKSLFKMIKNTFEKNPENVLSAYKDNAAVMKGSKAGRFFPNTQGEYAYHQEDIEILMKVETHNHPTAIAPFSGAATGSGGEIRDEGATGRGSKPKAGLVGFTVSNLRIPGYEQPWESDFGKPGRIVTALDIMTEGPLGGAAFNNEFGRPNLLGYFRTYEEQVTSHNGLEVRGYHKPIMLAGGLGNIRTDHVQKGEIPVGAKLIALGGPAMNIGLGGGAASSMASGQSNEDLDFASVQRENPEMERRCQEVIDKCWQLGDENPIAFIHDVGAGGLSNAFPELVNDGGRGGKFQLRDIPNDEPGMAPHEIWCNESQERYVLAVGVEDFDRFEAICKRERAQYAVIGEATAEPHLTVADSHFDNNPVDLPLDVLLGKAPKMHRDVTSKQVVGKALDVTNINVADAAQRLLRLPTIAEKTFLITIGDRSVTGLVARDQMVGPWQVPVANCAVTAATYDTYHGEAMSLGERTPAALLNYAASARLAVAESLTNIACANIGSLENIKLSANWMAAAGHPGEDAGLYEAVKAIGEELCPALGLTIPVGKDSMSMKTTWKDEGDSQEKSVTSPLSLIITAFGRVDDVRKTVTPQLRTDKGETSLILVDLGAGKNRMGASSLAQVYKQLGDITPDVDSPELLKGFYNAMQVLVADSKLLAYHDRSDGGLFTTVAEMAFAGHTGVTVDINGLTGNDIEALYNEELGAVIQVANSDLDAVNAVLKDHGLATISHIIGTLNSDDAIVFNRGKNTVLSNTRTELRTMWAETTYQMQARRDNPECAKQEFDAKFDVKDPGLNVKLNFDLNEDIAAPYIATGAKPPMAILREQGVNSHLEMAAAFNRAGFAAIDVHMSDILEGRLSLEQFKGLVACGGFSYGDVLGAGEGWAKSILFNDMAREQFQSFFHREDTFSLGVCNGCQMLSTLKELIPGTEHWPRFVTNKSERFEARFSLVEIQENPSVFFNGMAGSRMPIAVSHGEGHAEFANDNAVKAALDSGTVAVKFVDNYGNPTTQYPANPNGSPEGITGITSTDGRATVMMPHPERVFRAVANSWHPDEWREDSPWMRMFRNARKNVG.

Residues 300-325 (APFSGAATGSGGEIRDEGATGRGSKP) are disordered. Residues 304-315 (GAATGSGGEIRD) and Ala675 contribute to the ATP site. Mg(2+) is bound by residues Glu715, Asn719, and Asp885. Ser887 is a binding site for ATP. The Glutamine amidotransferase type-1 domain occupies 1043-1296 (MAILREQGVN…MFRNARKNVG (254 aa)). Cys1136 functions as the Nucleophile in the catalytic mechanism. The tract at residues 1232-1253 (TQYPANPNGSPEGITGITSTDG) is disordered. Residues His1261 and Glu1263 contribute to the active site.

It in the N-terminal section; belongs to the FGAMS family. As to quaternary structure, monomer.

The protein resides in the cytoplasm. The catalysed reaction is N(2)-formyl-N(1)-(5-phospho-beta-D-ribosyl)glycinamide + L-glutamine + ATP + H2O = 2-formamido-N(1)-(5-O-phospho-beta-D-ribosyl)acetamidine + L-glutamate + ADP + phosphate + H(+). Its pathway is purine metabolism; IMP biosynthesis via de novo pathway; 5-amino-1-(5-phospho-D-ribosyl)imidazole from N(2)-formyl-N(1)-(5-phospho-D-ribosyl)glycinamide: step 1/2. In terms of biological role, phosphoribosylformylglycinamidine synthase involved in the purines biosynthetic pathway. Catalyzes the ATP-dependent conversion of formylglycinamide ribonucleotide (FGAR) and glutamine to yield formylglycinamidine ribonucleotide (FGAM) and glutamate. The sequence is that of Phosphoribosylformylglycinamidine synthase from Pseudoalteromonas translucida (strain TAC 125).